Consider the following 108-residue polypeptide: UPF0060 membrane protein Spro_2289 (108 aa).

Helical transmembrane passes span 6-26 (LLFFATALAEIIGCFLPYLWL), 31-51 (SAWLLLPAAASLMLFVWLLTL), 61-81 (AAYGGVYVATALLWLRVVDGV), and 85-105 (ALDWLGAGVALAGMLIIVSGW).

This sequence belongs to the UPF0060 family.

It localises to the cell inner membrane. The sequence is that of UPF0060 membrane protein Spro_2289 from Serratia proteamaculans (strain 568).